The following is a 110-amino-acid chain: Large ribosomal subunit protein uL22 (110 aa).

The protein belongs to the universal ribosomal protein uL22 family. In terms of assembly, part of the 50S ribosomal subunit.

In terms of biological role, this protein binds specifically to 23S rRNA; its binding is stimulated by other ribosomal proteins, e.g. L4, L17, and L20. It is important during the early stages of 50S assembly. It makes multiple contacts with different domains of the 23S rRNA in the assembled 50S subunit and ribosome. The globular domain of the protein is located near the polypeptide exit tunnel on the outside of the subunit, while an extended beta-hairpin is found that lines the wall of the exit tunnel in the center of the 70S ribosome. The protein is Large ribosomal subunit protein uL22 of Pseudoalteromonas translucida (strain TAC 125).